Here is a 150-residue protein sequence, read N- to C-terminus: Placenta-specific protein 4 (150 aa).

In terms of tissue distribution, expressed in placental syncytiotrophoblast and choriocarcinoma cells.

This is Placenta-specific protein 4 (PLAC4) from Homo sapiens (Human).